A 145-amino-acid chain; its full sequence is Bacilliredoxin MW1318 (145 aa).

This sequence belongs to the bacilliredoxin family.

This Staphylococcus aureus (strain MW2) protein is Bacilliredoxin MW1318.